Reading from the N-terminus, the 103-residue chain is Protein Rev (103 aa).

S5 is subject to Phosphoserine; by host CK2. The segment at 18–26 (VIKILYQSN) is homomultimerization. A compositionally biased stretch (polar residues) spans 25 to 34 (SNPYPNDSGT). 2 disordered regions span residues 25–48 (SNPYPNDSGTRQARKNRRRRWRAR) and 66–103 (GLQEPSTLPLPPLDRLSLNPEEDLGTSETEHPQGTATT). The short motif at 34 to 50 (TRQARKNRRRRWRARQR) is the Nuclear localization signal and RNA-binding (RRE) element. Residues 36–48 (QARKNRRRRWRAR) are compositionally biased toward basic residues. A Nuclear export signal and binding to XPO1 motif is present at residues 73–84 (LPLPPLDRLSLN). S92 bears the Phosphoserine; by host mark.

Belongs to the HIV-1 REV protein family. As to quaternary structure, homomultimer; when bound to the RRE. Multimeric assembly is essential for activity and may involve XPO1. Binds to human KPNB1, XPO1, TNPO1, RANBP5 and IPO7. Interacts with the viral Integrase. Interacts with human KHDRBS1. Interacts with human NAP1; this interaction decreases Rev multimerization and stimulates its activity. Interacts with human DEAD-box helicases DDX3 and DDX24; these interactions may serve for viral RNA export to the cytoplasm and packaging, respectively. Interacts with human PSIP1; this interaction may inhibit HIV-1 DNA integration by promoting dissociation of the Integrase-LEDGF/p75 complex. Post-translationally, asymmetrically arginine dimethylated at one site by host PRMT6. Methylation impairs the RNA-binding activity and export of viral RNA from the nucleus to the cytoplasm. In terms of processing, phosphorylated by protein kinase CK2. Presence of, and maybe binding to the N-terminus of the regulatory beta subunit of CK2 is necessary for CK2-mediated Rev's phosphorylation.

The protein localises to the host nucleus. It localises to the host nucleolus. The protein resides in the host cytoplasm. Its function is as follows. Escorts unspliced or incompletely spliced viral pre-mRNAs (late transcripts) out of the nucleus of infected cells. These pre-mRNAs carry a recognition sequence called Rev responsive element (RRE) located in the env gene, that is not present in fully spliced viral mRNAs (early transcripts). This function is essential since most viral proteins are translated from unspliced or partially spliced pre-mRNAs which cannot exit the nucleus by the pathway used by fully processed cellular mRNAs. Rev itself is translated from a fully spliced mRNA that readily exits the nucleus. Rev's nuclear localization signal (NLS) binds directly to KPNB1/Importin beta-1 without previous binding to KPNA1/Importin alpha-1. KPNB1 binds to the GDP bound form of RAN (Ran-GDP) and targets Rev to the nucleus. In the nucleus, the conversion from Ran-GDP to Ran-GTP dissociates Rev from KPNB1 and allows Rev's binding to the RRE in viral pre-mRNAs. Rev multimerization on the RRE via cooperative assembly exposes its nuclear export signal (NES) to the surface. Rev can then form a complex with XPO1/CRM1 and Ran-GTP, leading to nuclear export of the complex. Conversion from Ran-GTP to Ran-GDP mediates dissociation of the Rev/RRE/XPO1/RAN complex, so that Rev can return to the nucleus for a subsequent round of export. Beside KPNB1, also seems to interact with TNPO1/Transportin-1, RANBP5/IPO5 and IPO7/RANBP7 for nuclear import. The nucleoporin-like HRB/RIP is an essential cofactor that probably indirectly interacts with Rev to release HIV RNAs from the perinuclear region to the cytoplasm. The polypeptide is Protein Rev (Pan troglodytes (Chimpanzee)).